The following is a 320-amino-acid chain: Malate dehydrogenase (320 aa).

NAD(+) contacts are provided by residues 10–15 (GAGQIG) and D34. R83 and R89 together coordinate substrate. NAD(+) contacts are provided by residues N96 and 119-121 (ITN). Substrate-binding residues include N121 and R152. The active-site Proton acceptor is H176.

It belongs to the LDH/MDH superfamily. MDH type 3 family.

It carries out the reaction (S)-malate + NAD(+) = oxaloacetate + NADH + H(+). Its function is as follows. Catalyzes the reversible oxidation of malate to oxaloacetate. The polypeptide is Malate dehydrogenase (Beijerinckia indica subsp. indica (strain ATCC 9039 / DSM 1715 / NCIMB 8712)).